The chain runs to 473 residues: Cysteine--tRNA ligase (473 aa).

Cys28 lines the Zn(2+) pocket. A 'HIGH' region motif is present at residues 30–40 (PTVYNYIHIGN). Zn(2+) is bound by residues Cys210, His235, and Glu239. Residues 267–271 (KMSKS) carry the 'KMSKS' region motif. Lys270 contributes to the ATP binding site.

This sequence belongs to the class-I aminoacyl-tRNA synthetase family. Monomer. It depends on Zn(2+) as a cofactor.

Its subcellular location is the cytoplasm. It carries out the reaction tRNA(Cys) + L-cysteine + ATP = L-cysteinyl-tRNA(Cys) + AMP + diphosphate. The polypeptide is Cysteine--tRNA ligase (Fusobacterium nucleatum subsp. nucleatum (strain ATCC 25586 / DSM 15643 / BCRC 10681 / CIP 101130 / JCM 8532 / KCTC 2640 / LMG 13131 / VPI 4355)).